Consider the following 589-residue polypeptide: MYRSHTCGELRAEHIGQEVLLAGWVHRRRDHGPLIFIDLRDRYGITQIVFDSADSPVAHAVASDARVEYVLQVRGRVVQRPEEAYNPDIATGMIEVHATEATVLNPAKTPPLYINKEGGEEETLRLKYRYLDLRRERMQRNIMLRHRIVKFIRDFLDREGFVEIETPILIKSTPEGARDYLVPSRLHPGKFYALPQSPQQLKQLLMVAGFDRYFQIARCFRDEDQRADRQPEFTQLDMEMSFVDQGDVLDIIERLFTALCREIVPHKRLVTPFPRLTYAEAMERFGSDKPDLRYGLELVDVSDVVAASSFGVFRAALDTGGQVKGLRIPGAGSYSRKQIDEVVELAKQAGARGLLWAVVPGEGGEVRSSFGRQVSPDEMAAIIRRMEGAPGDLLLIVADPPKIVAQTLDRLRREFGARLNLADPNVLAWAWVIDFPLVEWNEEEQRWDAVHHPFTAPKDEDLHLMDTDPGRVRAKAYDLILNGYEAGGGSIRIHRRDVQQRLFDLLGIDRETAMRQFGHMLEAFEYGAPPHGGIAPGIDRICMILADEVTIREVMAFPKTQQAVDLMTNAPSPVDERQLRELHIALRLD.

Glu-175 is a binding site for L-aspartate. The tract at residues 199-202 (QQLK) is aspartate. Arg-221 contributes to the L-aspartate binding site. Residues 221-223 (RDE) and Gln-230 each bind ATP. L-aspartate is bound at residue His-451. Glu-485 provides a ligand contact to ATP. Arg-492 is an L-aspartate binding site. 537 to 540 (GIDR) serves as a coordination point for ATP.

This sequence belongs to the class-II aminoacyl-tRNA synthetase family. Type 1 subfamily. In terms of assembly, homodimer.

Its subcellular location is the cytoplasm. The catalysed reaction is tRNA(Asx) + L-aspartate + ATP = L-aspartyl-tRNA(Asx) + AMP + diphosphate. Functionally, aspartyl-tRNA synthetase with relaxed tRNA specificity since it is able to aspartylate not only its cognate tRNA(Asp) but also tRNA(Asn). Reaction proceeds in two steps: L-aspartate is first activated by ATP to form Asp-AMP and then transferred to the acceptor end of tRNA(Asp/Asn). In Roseiflexus sp. (strain RS-1), this protein is Aspartate--tRNA(Asp/Asn) ligase.